The following is a 212-amino-acid chain: ATP phosphoribosyltransferase (212 aa).

Belongs to the ATP phosphoribosyltransferase family. Short subfamily. As to quaternary structure, heteromultimer composed of HisG and HisZ subunits.

It localises to the cytoplasm. It catalyses the reaction 1-(5-phospho-beta-D-ribosyl)-ATP + diphosphate = 5-phospho-alpha-D-ribose 1-diphosphate + ATP. The protein operates within amino-acid biosynthesis; L-histidine biosynthesis; L-histidine from 5-phospho-alpha-D-ribose 1-diphosphate: step 1/9. In terms of biological role, catalyzes the condensation of ATP and 5-phosphoribose 1-diphosphate to form N'-(5'-phosphoribosyl)-ATP (PR-ATP). Has a crucial role in the pathway because the rate of histidine biosynthesis seems to be controlled primarily by regulation of HisG enzymatic activity. In Albidiferax ferrireducens (strain ATCC BAA-621 / DSM 15236 / T118) (Rhodoferax ferrireducens), this protein is ATP phosphoribosyltransferase.